The sequence spans 209 residues: Large ribosomal subunit protein uL3 (209 aa).

The interval 128–156 is disordered; that stretch reads FAGGSRTHGQSDRLRAPGSVGGSSDPSRT.

This sequence belongs to the universal ribosomal protein uL3 family. In terms of assembly, part of the 50S ribosomal subunit. Forms a cluster with proteins L14 and L19.

Its function is as follows. One of the primary rRNA binding proteins, it binds directly near the 3'-end of the 23S rRNA, where it nucleates assembly of the 50S subunit. The protein is Large ribosomal subunit protein uL3 of Prosthecochloris aestuarii (strain DSM 271 / SK 413).